The following is a 130-amino-acid chain: Small ribosomal subunit protein uS9 (130 aa).

Residues 98-130 (LKRAGLLTRDPRMKERKKPGLKKARRSPQFSKR) form a disordered region. Over residues 111 to 130 (KERKKPGLKKARRSPQFSKR) the composition is skewed to basic residues.

It belongs to the universal ribosomal protein uS9 family.

This chain is Small ribosomal subunit protein uS9, found in Staphylococcus epidermidis (strain ATCC 35984 / DSM 28319 / BCRC 17069 / CCUG 31568 / BM 3577 / RP62A).